The chain runs to 101 residues: Small ribosomal subunit protein uS10 (101 aa).

It belongs to the universal ribosomal protein uS10 family. Part of the 30S ribosomal subunit.

In terms of biological role, involved in the binding of tRNA to the ribosomes. The polypeptide is Small ribosomal subunit protein uS10 (Brachyspira hyodysenteriae (Treponema hyodysenteriae)).